The following is a 473-amino-acid chain: Uronate isomerase (473 aa).

It belongs to the metallo-dependent hydrolases superfamily. Uronate isomerase family.

The enzyme catalyses D-glucuronate = D-fructuronate. It carries out the reaction aldehydo-D-galacturonate = keto-D-tagaturonate. It participates in carbohydrate metabolism; pentose and glucuronate interconversion. The protein is Uronate isomerase of Bacillus licheniformis (strain ATCC 14580 / DSM 13 / JCM 2505 / CCUG 7422 / NBRC 12200 / NCIMB 9375 / NCTC 10341 / NRRL NRS-1264 / Gibson 46).